The sequence spans 88 residues: MISKEQKQKIITEFGKNPNDTGSVEVQIALITDRIRYLTEHLRSNKKDHSSKRGLLKLVGQRRNLLRYYQKKNLEAYRTLIAKLGLRK.

This sequence belongs to the universal ribosomal protein uS15 family. In terms of assembly, part of the 30S ribosomal subunit. Forms a bridge to the 50S subunit in the 70S ribosome, contacting the 23S rRNA.

Functionally, one of the primary rRNA binding proteins, it binds directly to 16S rRNA where it helps nucleate assembly of the platform of the 30S subunit by binding and bridging several RNA helices of the 16S rRNA. Its function is as follows. Forms an intersubunit bridge (bridge B4) with the 23S rRNA of the 50S subunit in the ribosome. The protein is Small ribosomal subunit protein uS15 of Borrelia turicatae (strain 91E135).